The sequence spans 335 residues: Holliday junction branch migration complex subunit RuvB (335 aa).

The segment at 1 to 183 (MDERIISSET…FGVIDHLEFY (183 aa)) is large ATPase domain (RuvB-L). ATP-binding positions include Leu-22, Arg-23, Gly-64, Lys-67, Thr-68, Thr-69, 130 to 132 (EDY), Arg-173, Tyr-183, and Arg-220. Thr-68 contacts Mg(2+). The small ATPAse domain (RuvB-S) stretch occupies residues 184 to 254 (TEEQLTEIVL…LAKEALTLLQ (71 aa)). The head domain (RuvB-H) stretch occupies residues 257 to 335 (PRGLDTIDQK…HLGISYEKEV (79 aa)). Arg-293, Arg-312, and Arg-317 together coordinate DNA.

Belongs to the RuvB family. As to quaternary structure, homohexamer. Forms an RuvA(8)-RuvB(12)-Holliday junction (HJ) complex. HJ DNA is sandwiched between 2 RuvA tetramers; dsDNA enters through RuvA and exits via RuvB. An RuvB hexamer assembles on each DNA strand where it exits the tetramer. Each RuvB hexamer is contacted by two RuvA subunits (via domain III) on 2 adjacent RuvB subunits; this complex drives branch migration. In the full resolvosome a probable DNA-RuvA(4)-RuvB(12)-RuvC(2) complex forms which resolves the HJ.

Its subcellular location is the cytoplasm. The catalysed reaction is ATP + H2O = ADP + phosphate + H(+). Its function is as follows. The RuvA-RuvB-RuvC complex processes Holliday junction (HJ) DNA during genetic recombination and DNA repair, while the RuvA-RuvB complex plays an important role in the rescue of blocked DNA replication forks via replication fork reversal (RFR). RuvA specifically binds to HJ cruciform DNA, conferring on it an open structure. The RuvB hexamer acts as an ATP-dependent pump, pulling dsDNA into and through the RuvAB complex. RuvB forms 2 homohexamers on either side of HJ DNA bound by 1 or 2 RuvA tetramers; 4 subunits per hexamer contact DNA at a time. Coordinated motions by a converter formed by DNA-disengaged RuvB subunits stimulates ATP hydrolysis and nucleotide exchange. Immobilization of the converter enables RuvB to convert the ATP-contained energy into a lever motion, pulling 2 nucleotides of DNA out of the RuvA tetramer per ATP hydrolyzed, thus driving DNA branch migration. The RuvB motors rotate together with the DNA substrate, which together with the progressing nucleotide cycle form the mechanistic basis for DNA recombination by continuous HJ branch migration. Branch migration allows RuvC to scan DNA until it finds its consensus sequence, where it cleaves and resolves cruciform DNA. This chain is Holliday junction branch migration complex subunit RuvB, found in Listeria welshimeri serovar 6b (strain ATCC 35897 / DSM 20650 / CCUG 15529 / CIP 8149 / NCTC 11857 / SLCC 5334 / V8).